Here is an 883-residue protein sequence, read N- to C-terminus: Integrator complex subunit 6-A (883 aa).

Positions 3–227 (ILLFLLDTSA…QCLESLVQKV (225 aa)) constitute a VWFA domain. The Inhibitory loop signature appears at 626–633 (MMIDEADE).

It belongs to the Integrator subunit 6 family. Component of the Integrator complex, composed of core subunits INTS1, INTS2, INTS3, INTS4, INTS5, INTS6, INTS7, INTS8, INTS9/RC74, INTS10, INTS11/CPSF3L, INTS12, INTS13, INTS14 and INTS15. The core complex associates with protein phosphatase 2A subunits PPP2CA and PPP2R1A, to form the Integrator-PP2A (INTAC) complex.

It is found in the nucleus. The protein resides in the chromosome. In terms of biological role, component of the integrator complex, a multiprotein complex that terminates RNA polymerase II (Pol II) transcription in the promoter-proximal region of genes. The integrator complex provides a quality checkpoint during transcription elongation by driving premature transcription termination of transcripts that are unfavorably configured for transcriptional elongation: the complex terminates transcription by (1) catalyzing dephosphorylation of the C-terminal domain (CTD) of Pol II subunit POLR2A/RPB1 and SUPT5H/SPT5, (2) degrading the exiting nascent RNA transcript via endonuclease activity and (3) promoting the release of Pol II from bound DNA. The integrator complex is also involved in terminating the synthesis of non-coding Pol II transcripts, such as enhancer RNAs (eRNAs), small nuclear RNAs (snRNAs), telomerase RNAs and long non-coding RNAs (lncRNAs). Within the integrator complex, INTS6 acts as a molecular adapter that promotes assembly of protein phosphatase 2A (PP2A) subunits to the integrator core complex, promoting recruitment of PP2A to transcription pause-release checkpoint. This Xenopus laevis (African clawed frog) protein is Integrator complex subunit 6-A (ints6-a).